The sequence spans 565 residues: Heme/hemopexin transporter protein HuxB (565 aa).

Residues 1–26 form the signal peptide; it reads MKMRPRYSVIASAVSLGFVLSKSVMA. The 78-residue stretch at 73–150 folds into the POTRA domain; sequence FPLTQVQILD…GTVKILLLKG (78 aa).

The protein belongs to the TPS (TC 1.B.20) family.

It localises to the cell outer membrane. Likely functions in the release of soluble HxuA from the cell. Its function is as follows. Probable member of a two partner secretion pathway (TPS) in which it mediates the secretion of HuxA. This Haemophilus influenzae protein is Heme/hemopexin transporter protein HuxB (hxuB).